Here is a 142-residue protein sequence, read N- to C-terminus: Ribosome maturation factor RimP (142 aa).

This sequence belongs to the RimP family.

It is found in the cytoplasm. Its function is as follows. Required for maturation of 30S ribosomal subunits. In Sulfurovum sp. (strain NBC37-1), this protein is Ribosome maturation factor RimP.